We begin with the raw amino-acid sequence, 183 residues long: 2-C-methyl-D-erythritol 2,4-cyclodiphosphate synthase (183 aa).

Positions 10 and 12 each coordinate a divalent metal cation. 4-CDP-2-C-methyl-D-erythritol 2-phosphate-binding positions include 10-12 and 38-39; these read DVH and HS. H46 provides a ligand contact to a divalent metal cation. 4-CDP-2-C-methyl-D-erythritol 2-phosphate contacts are provided by residues 60–62 and 65–69; these read DIG and FPDTD.

The protein belongs to the IspF family. In terms of assembly, homotrimer. The cofactor is a divalent metal cation.

It carries out the reaction 4-CDP-2-C-methyl-D-erythritol 2-phosphate = 2-C-methyl-D-erythritol 2,4-cyclic diphosphate + CMP. It functions in the pathway isoprenoid biosynthesis; isopentenyl diphosphate biosynthesis via DXP pathway; isopentenyl diphosphate from 1-deoxy-D-xylulose 5-phosphate: step 4/6. Involved in the biosynthesis of isopentenyl diphosphate (IPP) and dimethylallyl diphosphate (DMAPP), two major building blocks of isoprenoid compounds. Catalyzes the conversion of 4-diphosphocytidyl-2-C-methyl-D-erythritol 2-phosphate (CDP-ME2P) to 2-C-methyl-D-erythritol 2,4-cyclodiphosphate (ME-CPP) with a corresponding release of cytidine 5-monophosphate (CMP). The protein is 2-C-methyl-D-erythritol 2,4-cyclodiphosphate synthase of Verminephrobacter eiseniae (strain EF01-2).